Here is a 184-residue protein sequence, read N- to C-terminus: NADH-dependent flavin reductase subunit 2 (184 aa).

The protein belongs to the NADH-dependent flavin reductase family. Requires LJ_0548 for activity, but the exact composition of the enzyme is unclear.

It catalyses the reaction a reduced flavin + NAD(+) = an oxidized flavin + NADH + 2 H(+). Functionally, component of an enzyme that catalyzes the reduction of free flavins (FMN, FAD and riboflavin) by NADH; the reduced flavins produced by this reaction likely spontaneously react with oxygen, yielding hydrogen peroxide. Is responsible for the major H(2)O(2) production in L.johnsonii in the presence of oxygen. Cannot use NADPH instead of NADH as the electron donor. This Lactobacillus johnsonii (strain CNCM I-12250 / La1 / NCC 533) protein is NADH-dependent flavin reductase subunit 2 (nfr2).